The primary structure comprises 214 residues: Transcription factor 23 (214 aa).

Disordered regions lie at residues 1–86 and 174–214; these read MSQR…ARER and DSTT…LGDK. Residues 40 to 49 are compositionally biased toward basic and acidic residues; sequence TRQDPWEERS. A bHLH domain is found at 76–128; that stretch reads EASPENAARERSRVRTLRQAFLALQAALPAVPPDTKLSKLDVLVLAASYIAHL. Residues 174–183 show a composition bias toward polar residues; that stretch reads DSTTASTPSQ.

Forms inactive heterodimeric complexes with TCF3. As to expression, expressed in liver, kidney and spleen.

The protein localises to the nucleus. Its function is as follows. Inhibits E-box-mediated binding and transactivation of bHLH factors. Inhibitory effect is similar to that of ID proteins. Inhibits the formation of TCF3 and MYOD1 homodimers and heterodimers. Lacks DNA binding activity. Seems to play a role in the inhibition of myogenesis. The polypeptide is Transcription factor 23 (TCF23) (Homo sapiens (Human)).